The chain runs to 394 residues: Probable alginate O-acetylase AlgJ (394 aa).

The signal sequence occupies residues 1–37; the sequence is MTRSLRVLYIGLFLVLLLALGAWSLRSFFGFSTNADA. Asp-191 is an active-site residue. His-193 serves as the catalytic Proton acceptor. Residue Ser-287 is the Nucleophile of the active site.

This sequence belongs to the AlgJ family.

The protein resides in the cell inner membrane. It is found in the periplasm. It functions in the pathway glycan biosynthesis; alginate biosynthesis. Together with AlgI and AlgF, forms an inner membrane complex which probably interacts with the alginate polymerization-transport complex and adds acetyl groups at the O-2 and O-3 positions of mannuronate residues. Acetylation of alginate is important for the architecture of biofilms and increases the ability of alginate to act as a defense barrier. This is Probable alginate O-acetylase AlgJ (algJ) from Pseudomonas fluorescens.